Here is a 567-residue protein sequence, read N- to C-terminus: 2-succinyl-5-enolpyruvyl-6-hydroxy-3-cyclohexene-1-carboxylate synthase (567 aa).

Belongs to the TPP enzyme family. MenD subfamily. Homodimer. Requires Mg(2+) as cofactor. It depends on Mn(2+) as a cofactor. Thiamine diphosphate serves as cofactor.

The enzyme catalyses isochorismate + 2-oxoglutarate + H(+) = 5-enolpyruvoyl-6-hydroxy-2-succinyl-cyclohex-3-ene-1-carboxylate + CO2. The protein operates within quinol/quinone metabolism; 1,4-dihydroxy-2-naphthoate biosynthesis; 1,4-dihydroxy-2-naphthoate from chorismate: step 2/7. It participates in quinol/quinone metabolism; menaquinone biosynthesis. Its function is as follows. Catalyzes the thiamine diphosphate-dependent decarboxylation of 2-oxoglutarate and the subsequent addition of the resulting succinic semialdehyde-thiamine pyrophosphate anion to isochorismate to yield 2-succinyl-5-enolpyruvyl-6-hydroxy-3-cyclohexene-1-carboxylate (SEPHCHC). In Yersinia pseudotuberculosis serotype O:1b (strain IP 31758), this protein is 2-succinyl-5-enolpyruvyl-6-hydroxy-3-cyclohexene-1-carboxylate synthase.